Here is a 579-residue protein sequence, read N- to C-terminus: Threonylcarbamoyladenosine tRNA methylthiotransferase (579 aa).

Serine 53 is modified (phosphoserine). The MTTase N-terminal domain occupies 64–172 (QKIWIRTWGC…VVEVVEETIK (109 aa)). [4Fe-4S] cluster is bound by residues cysteine 73 and cysteine 109. The residue at position 122 (serine 122) is a Phosphoserine. Residues cysteine 138, cysteine 214, cysteine 218, and cysteine 221 each contribute to the [4Fe-4S] cluster site. Residues 200 to 431 (RKNPLIEIIS…RVFHSYSPYD (232 aa)) enclose the Radical SAM core domain. The TRAM domain maps to 431–493 (DHKIGERQQV…KHFMKGQPVS (63 aa)). Threonine 499 bears the Phosphothreonine mark. The helical transmembrane segment at 556–578 (CALRMSVGLALLGLLFAFFVKVY) threads the bilayer.

The protein belongs to the methylthiotransferase family. CDKAL1 subfamily. Requires [4Fe-4S] cluster as cofactor. Expressed in pancreatic islets.

Its subcellular location is the endoplasmic reticulum membrane. It carries out the reaction N(6)-L-threonylcarbamoyladenosine(37) in tRNA + (sulfur carrier)-SH + AH2 + 2 S-adenosyl-L-methionine = 2-methylsulfanyl-N(6)-L-threonylcarbamoyladenosine(37) in tRNA + (sulfur carrier)-H + 5'-deoxyadenosine + L-methionine + A + S-adenosyl-L-homocysteine + 2 H(+). In terms of biological role, catalyzes the methylthiolation of N6-threonylcarbamoyladenosine (t(6)A), leading to the formation of 2-methylthio-N6-threonylcarbamoyladenosine (ms(2)t(6)A) at position 37 in tRNAs that read codons beginning with adenine. This chain is Threonylcarbamoyladenosine tRNA methylthiotransferase (CDKAL1), found in Homo sapiens (Human).